The sequence spans 298 residues: Ornithine carbamoyltransferase (298 aa).

Carbamoyl phosphate-binding positions include 50–53 (STRT), Q77, R101, and 128–131 (HPCQ). Residues N159, D216, and 220–221 (SM) contribute to the L-ornithine site. Residues 256 to 257 (CL) and R284 contribute to the carbamoyl phosphate site.

The protein belongs to the aspartate/ornithine carbamoyltransferase superfamily. OTCase family.

Its subcellular location is the cytoplasm. It catalyses the reaction carbamoyl phosphate + L-ornithine = L-citrulline + phosphate + H(+). The protein operates within amino-acid biosynthesis; L-arginine biosynthesis; L-arginine from L-ornithine and carbamoyl phosphate: step 1/3. Reversibly catalyzes the transfer of the carbamoyl group from carbamoyl phosphate (CP) to the N(epsilon) atom of ornithine (ORN) to produce L-citrulline. This Methylococcus capsulatus (strain ATCC 33009 / NCIMB 11132 / Bath) protein is Ornithine carbamoyltransferase.